The chain runs to 538 residues: Putative outer membrane porin BglH (538 aa).

An N-terminal signal peptide occupies residues 1–25 (MFRRNLITSAILLMAPLAFSAQSLA). Residues 52-82 (KDEEKKKYTPATVNRSVSTNDQGYAANPFPT) are disordered. Over residues 62–73 (ATVNRSVSTNDQ) the composition is skewed to polar residues.

The protein belongs to the porin LamB (TC 1.B.3) family.

It localises to the cell outer membrane. Functionally, may be a sugar porin with a broad carbohydrate specificity. This is Putative outer membrane porin BglH (bglH) from Shigella flexneri serotype 5b (strain 8401).